A 78-amino-acid polypeptide reads, in one-letter code: Large ribosomal subunit protein bL28 (78 aa).

The protein belongs to the bacterial ribosomal protein bL28 family.

This is Large ribosomal subunit protein bL28 from Hamiltonella defensa subsp. Acyrthosiphon pisum (strain 5AT).